Here is a 251-residue protein sequence, read N- to C-terminus: Ubiquinone/menaquinone biosynthesis C-methyltransferase UbiE (251 aa).

S-adenosyl-L-methionine is bound by residues T74, D95, and 123-124; that span reads DA.

This sequence belongs to the class I-like SAM-binding methyltransferase superfamily. MenG/UbiE family.

The catalysed reaction is a 2-demethylmenaquinol + S-adenosyl-L-methionine = a menaquinol + S-adenosyl-L-homocysteine + H(+). It carries out the reaction a 2-methoxy-6-(all-trans-polyprenyl)benzene-1,4-diol + S-adenosyl-L-methionine = a 5-methoxy-2-methyl-3-(all-trans-polyprenyl)benzene-1,4-diol + S-adenosyl-L-homocysteine + H(+). Its pathway is quinol/quinone metabolism; menaquinone biosynthesis; menaquinol from 1,4-dihydroxy-2-naphthoate: step 2/2. The protein operates within cofactor biosynthesis; ubiquinone biosynthesis. Methyltransferase required for the conversion of demethylmenaquinol (DMKH2) to menaquinol (MKH2) and the conversion of 2-polyprenyl-6-methoxy-1,4-benzoquinol (DDMQH2) to 2-polyprenyl-3-methyl-6-methoxy-1,4-benzoquinol (DMQH2). In Idiomarina loihiensis (strain ATCC BAA-735 / DSM 15497 / L2-TR), this protein is Ubiquinone/menaquinone biosynthesis C-methyltransferase UbiE.